The sequence spans 153 residues: ORM1-like protein 3 (153 aa).

Positions 1-17 (MNVGTAHSEVNPNTRVM) are important for ceramide level-sensing. Residues 1 to 21 (MNVGTAHSEVNPNTRVMNSRG) are Cytoplasmic-facing. Helical transmembrane passes span 22 to 42 (IWLS…SIPF) and 43 to 63 (VSVP…MYIF). The Cytoplasmic segment spans residues 64 to 94 (LHTVKGTPFETPDQGKARLLTHWEQMDYGVQ). Residues 95-117 (FTASRKFLTITPIVLYFLTSFYT) traverse the membrane as a helical segment. The Extracellular portion of the chain corresponds to 118-121 (KYDQ). The helical transmembrane segment at 122–142 (IHFILNTVSLMSVLIPKLPQL) threads the bilayer. Position 137 is a hydroxyproline (Pro137). At 143 to 153 (HGVRIFGINKY) the chain is on the cytoplasmic side.

It belongs to the ORM family. Ceramide-sensitive subunit of the serine palmitoyltransferase (SPT) complex, which is also composed of SPTLC1, SPTLC2/3 and SPTSSA/B. Post-translationally, when hydroxylated at Pro-137, ubiquitinated via 'Lys-48'-linkage, leading to proteasomal degradation. In endothelial cells, ORMDL3 proteasomal degradation is controlled by the sphingosine 1-phosphate receptor signaling pathway.

It localises to the endoplasmic reticulum membrane. Plays an essential role in the homeostatic regulation of sphingolipid de novo biosynthesis by modulating the activity of the serine palmitoyltransferase (SPT) in response to ceramide levels. When complexed to SPT, the binding of ceramides to its N-terminus stabilizes a conformation that block SPT substrate entry, hence preventing SPT catalytic activity. Through this mechanism, maintains ceramide levels at sufficient concentrations for the production of complex sphingolipids, but which prevents the accumulation of ceramides to levels that trigger apoptosis. The chain is ORM1-like protein 3 (ORMDL3) from Bos taurus (Bovine).